A 367-amino-acid polypeptide reads, in one-letter code: Phosphoribosylaminoimidazole-succinocarboxamide synthase (367 aa).

The protein belongs to the SAICAR synthetase family.

The catalysed reaction is 5-amino-1-(5-phospho-D-ribosyl)imidazole-4-carboxylate + L-aspartate + ATP = (2S)-2-[5-amino-1-(5-phospho-beta-D-ribosyl)imidazole-4-carboxamido]succinate + ADP + phosphate + 2 H(+). It functions in the pathway purine metabolism; IMP biosynthesis via de novo pathway; 5-amino-1-(5-phospho-D-ribosyl)imidazole-4-carboxamide from 5-amino-1-(5-phospho-D-ribosyl)imidazole-4-carboxylate: step 1/2. This chain is Phosphoribosylaminoimidazole-succinocarboxamide synthase, found in Vibrio atlanticus (strain LGP32) (Vibrio splendidus (strain Mel32)).